Reading from the N-terminus, the 500-residue chain is MKRLLPFLTELDAWVTELKPLKQMTLDSRQVDEGDLFVALKGHQVDGRRFIQKAIEQGAALVLAEADEGQDEIELDAKFAKYNLDRTACKVVLVPNLARILSEIAGAFYANPSEKLTLVGVTGTNGKTTSAQLLAQWHNLLGGKSAVMGTIGNGLYGKVQEAANTTGSAIEVQRNLADFVEMGADFCAMEVSSHGLAQYRAEALSYDLAVFTNLSRDHLDYHKTMEEYAQAKFRLFSELDTKAQVLNADDEVGREWLAKLPDAVAVSTDASFSSEHKFVKATDVSFSLQGVKIAFESSWGNGELNSRLIGAFNVNNLLTALAGLLVLGHDLPKLIETAPLLQGVAGRMECVVSQKNPQNRPLVLVDYAHTPDALEKALQAARLHTEGELYCIFGCGGDRDAGKRPMMAAIAEELADKVIATDDNPRTEDNAKIMADILNGFVQVEKVQVIHDREQAIKTAIEQANEKDVILIAGKGHEDYQIIGTTKHHFSDQETAAKYL.

UDP-N-acetyl-alpha-D-muramoyl-L-alanyl-D-glutamate contacts are provided by residues Leu-26, Ser-28, and 43–45 (HQV). Residue 123-129 (GTNGKTT) participates in ATP binding. Residues Asn-164, 165-166 (TT), Ser-192, Gln-198, and Arg-200 each bind UDP-N-acetyl-alpha-D-muramoyl-L-alanyl-D-glutamate. Lys-232 is subject to N6-carboxylysine. Meso-2,6-diaminopimelate is bound by residues Arg-399, 423 to 426 (DNPR), Gly-474, and Glu-478. The short motif at 423-426 (DNPR) is the Meso-diaminopimelate recognition motif element.

The protein belongs to the MurCDEF family. MurE subfamily. It depends on Mg(2+) as a cofactor. In terms of processing, carboxylation is probably crucial for Mg(2+) binding and, consequently, for the gamma-phosphate positioning of ATP.

It is found in the cytoplasm. The enzyme catalyses UDP-N-acetyl-alpha-D-muramoyl-L-alanyl-D-glutamate + meso-2,6-diaminopimelate + ATP = UDP-N-acetyl-alpha-D-muramoyl-L-alanyl-gamma-D-glutamyl-meso-2,6-diaminopimelate + ADP + phosphate + H(+). It functions in the pathway cell wall biogenesis; peptidoglycan biosynthesis. Functionally, catalyzes the addition of meso-diaminopimelic acid to the nucleotide precursor UDP-N-acetylmuramoyl-L-alanyl-D-glutamate (UMAG) in the biosynthesis of bacterial cell-wall peptidoglycan. In Actinobacillus pleuropneumoniae serotype 5b (strain L20), this protein is UDP-N-acetylmuramoyl-L-alanyl-D-glutamate--2,6-diaminopimelate ligase.